The sequence spans 397 residues: Argininosuccinate synthase (397 aa).

9–17 (AYSGGLDTS) is an ATP binding site. Residue Y86 coordinates L-citrulline. Residue G116 participates in ATP binding. Residues T118, N122, and D123 each coordinate L-aspartate. Residue N122 coordinates L-citrulline. L-citrulline-binding residues include R126, S174, E259, and Y271.

Belongs to the argininosuccinate synthase family. Type 1 subfamily. Homotetramer.

It localises to the cytoplasm. The enzyme catalyses L-citrulline + L-aspartate + ATP = 2-(N(omega)-L-arginino)succinate + AMP + diphosphate + H(+). The protein operates within amino-acid biosynthesis; L-arginine biosynthesis; L-arginine from L-ornithine and carbamoyl phosphate: step 2/3. This chain is Argininosuccinate synthase, found in Lactococcus lactis subsp. cremoris (strain MG1363).